Here is a 182-residue protein sequence, read N- to C-terminus: Ribosome-recycling factor (182 aa).

The protein belongs to the RRF family.

It is found in the cytoplasm. Its function is as follows. Responsible for the release of ribosomes from messenger RNA at the termination of protein biosynthesis. May increase the efficiency of translation by recycling ribosomes from one round of translation to another. This Prochlorococcus marinus (strain MIT 9515) protein is Ribosome-recycling factor.